Reading from the N-terminus, the 903-residue chain is Valine--tRNA ligase (903 aa).

Positions 1–15 are enriched in polar residues; sequence MVCVTDQNNETTSQN. Positions 1–21 are disordered; that stretch reads MVCVTDQNNETTSQNRADKLP. The 'HIGH' region signature appears at 61 to 71; that stretch reads PNVTGQLHMGH. The 'KMSKS' region signature appears at 552–556; that stretch reads KMSKS. ATP is bound at residue Lys-555. The stretch at 836–903 forms a coiled coil; it reads TVDVAAERKR…RINKRLEELA (68 aa).

It belongs to the class-I aminoacyl-tRNA synthetase family. ValS type 1 subfamily. Monomer.

It is found in the cytoplasm. It carries out the reaction tRNA(Val) + L-valine + ATP = L-valyl-tRNA(Val) + AMP + diphosphate. Its function is as follows. Catalyzes the attachment of valine to tRNA(Val). As ValRS can inadvertently accommodate and process structurally similar amino acids such as threonine, to avoid such errors, it has a 'posttransfer' editing activity that hydrolyzes mischarged Thr-tRNA(Val) in a tRNA-dependent manner. This is Valine--tRNA ligase from Corynebacterium glutamicum (strain ATCC 13032 / DSM 20300 / JCM 1318 / BCRC 11384 / CCUG 27702 / LMG 3730 / NBRC 12168 / NCIMB 10025 / NRRL B-2784 / 534).